The following is a 698-amino-acid chain: MAEEARGGQRVVVDDDREDASSVASSTERAFEGEPLPSLGETVTARSAAVSGVLGAVVSVVAMRLNLTSGLLPSLGVPAGLLGFFLARVWIRALDVVGVSHLPFTRQENTLIQIAVVSCSTIAFSGGFGTYILGMSGKSANEGHIGSHGRNVEEPNIGRVIAFLFLVNFSGLFIIVPLRKMMIIRHRLTFPSGTATAHLINSFHTPHGAKQARLQVVTLFKSLGATVLWPIFQWFFAGGKNCGFQIFPTFGMAAYRRGFYFDFSTTNVGIGMICPPMITASMLAGSIVSWGILWPYIETKAGRWFPENLDANDLGGIMGYRVFVGVSMILADGLFTILSALVRTACAMRKRRRGASTVTAAVPPFQCLSATERTMQSFDDRRRAQVFLRDSFPTWVAVASYAALAALSVVAVPLLYPQLGHRHVAAAYVAAPVFAFCNAYGVGVTDMNLSATYGKIAMMVFSSWVGMDGGGVVAGLAACGIIVSAVSGSSDFMQDFKTGYLTLTSPRAMLVGQVAGTALGCVVNPAIFWVFYKVYNMGGGGGDGADVAPYARAYRGIAVLSVGRHGLPDHSVLLCKLFFAMALALSAAREVAERRRWRALRYIPSTIGVAVAFFVPPRIPVGMAVGCLALHVWRRHVDAGGARLLLPAVASGLICGDGLGSLASSMLTLLRARPPICIKFVSRFENQKLDAFLATRHA.

A disordered region spans residues 1–36 (MAEEARGGQRVVVDDDREDASSVASSTERAFEGEPL). A run of 14 helical transmembrane segments spans residues 43 to 63 (VTARSAAVSGVLGAVVSVVAM), 67 to 87 (LTSGLLPSLGVPAGLLGFFLA), 114 to 134 (IAVVSCSTIAFSGGFGTYILG), 157 to 177 (IGRVIAFLFLVNFSGLFIIVP), 216 to 236 (VVTLFKSLGATVLWPIFQWFF), 277 to 297 (MITASMLAGSIVSWGILWPYI), 322 to 342 (VFVGVSMILADGLFTILSALV), 395 to 415 (WVAVASYAALAALSVVAVPLL), 424 to 444 (VAAAYVAAPVFAFCNAYGVGV), 463 to 483 (SWVGMDGGGVVAGLAACGIIV), 511 to 531 (VGQVAGTALGCVVNPAIFWVF), 567 to 587 (LPDHSVLLCKLFFAMALALSA), 607 to 627 (IGVAVAFFVPPRIPVGMAVGC), and 644 to 664 (LLLPAVASGLICGDGLGSLAS).

It belongs to the YSL (TC 2.A.67.2) family. As to expression, expressed at low levels in roots.

It localises to the membrane. In terms of biological role, may be involved in the transport of nicotianamine-chelated metals. This is Probable metal-nicotianamine transporter YSL17 (YSL17) from Oryza sativa subsp. japonica (Rice).